Reading from the N-terminus, the 398-residue chain is Metallophosphoesterase 1 (398 aa).

Residues 25–45 (VCFVSSVLIFCEFFIYYLVIF) traverse the membrane as a helical segment. A divalent metal cation is bound by residues aspartate 75, aspartate 117, asparagine 155, histidine 251, histidine 305, and histidine 307. A helical transmembrane segment spans residues 359-379 (VFAIYWAAGALLVVLVLAHFQ). The short motif at 394-398 (KHKAA) is the Di-lysine motif element.

The protein belongs to the metallophosphoesterase superfamily. MPPE1 family. Mn(2+) serves as cofactor.

It localises to the endoplasmic reticulum-Golgi intermediate compartment membrane. Its function is as follows. Metallophosphoesterase that catalyzes the removal of a side-chain ethanolamine-phosphate (EtNP) from the second mannose of the GPI-anchor protein intermediate. Participates in the glycan remodeling steps of GPI-anchor maturation to allow an efficient transport of GPI-anchor proteins from the endoplasmic reticulum to the Golgi. This Gallus gallus (Chicken) protein is Metallophosphoesterase 1.